A 230-amino-acid chain; its full sequence is Ubiquitin carboxyl-terminal hydrolase isozyme L3 (230 aa).

The UCH catalytic domain maps to 5–229 (RWLPLEANPE…LRFNAIALSA (225 aa)). The interaction with ubiquitin stretch occupies residues 8–13 (PLEANP). Cysteine 95 acts as the Nucleophile in catalysis. Serine 130 bears the Phosphoserine mark. Positions 152-159 (AHEGQTEA) are interaction with ubiquitin. Crossover loop which restricts access of large ubiquitin adducts to the active site. The active-site Proton donor is the histidine 169. An interaction with ubiquitin region spans residues 219–224 (ELRFNA).

It belongs to the peptidase C12 family. In terms of assembly, preferentially binds diubiquitin; the interaction does not hydrolyze diubiquitin but, in vitro, inhibits the hydrolyzing activity on other substrates. As to expression, ubiquitously expressed, with highest levels in brain, liver, heart, thymus, kidney and testis. Highly expressed in the cauda epididymidis, in meiotic pachytene spermatocytes and post-meiotic spematids. In the retina, enriched in the photoreceptor inner segment.

Its subcellular location is the cytoplasm. It catalyses the reaction Thiol-dependent hydrolysis of ester, thioester, amide, peptide and isopeptide bonds formed by the C-terminal Gly of ubiquitin (a 76-residue protein attached to proteins as an intracellular targeting signal).. Inhibited by monoubiquitin and diubiquitin. In terms of biological role, deubiquitinating enzyme (DUB) that controls levels of cellular ubiquitin through processing of ubiquitin precursors and ubiquitinated proteins. Thiol protease that recognizes and hydrolyzes a peptide bond at the C-terminal glycine of either ubiquitin or NEDD8. Has a 10-fold preference for Arg and Lys at position P3'', and exhibits a preference towards 'Lys-48'-linked ubiquitin chains. Deubiquitinates ENAC in apical compartments, thereby regulating apical membrane recycling. Indirectly increases the phosphorylation of IGFIR, AKT and FOXO1 and promotes insulin-signaling and insulin-induced adipogenesis. Required for stress-response retinal, skeletal muscle and germ cell maintenance. May be involved in working memory. Can hydrolyze UBB(+1), a mutated form of ubiquitin which is not effectively degraded by the proteasome. This Mus musculus (Mouse) protein is Ubiquitin carboxyl-terminal hydrolase isozyme L3 (Uchl3).